Reading from the N-terminus, the 352-residue chain is MDRTKTRFRKRGQITGKITTSRQPHPQNEQSLQRSTSGYPLQEVVDDEVLGPSAPGVDPSPPCRSLGWKRKKEWSDESEEEPEKELAPEPEETWVVEMLCGLKMKLKQQRVSPILPEHHKDFNSQLAPGVDPSPPHRSFCWKRKREWWDESEESLEEEPRKVLAPEPEEIWVAEMLCGLKMKLKRRRVSLVLPEHHEAFNRLLEDPVIKRFLAWDKDLRVSDKYLLAMVIAYFSRAGLPSWQYQRIHFFLALYLANDMEEDDEDPKQNIFYFLYGKTRSRIPLVRNRRFQLCRCLNPRARKNRSQIALFQKLRFQFFCSMSGRAWVSREELEEIQAYDPEHWVWARDRARLS.

Over residues 1–12 (MDRTKTRFRKRG) the composition is skewed to basic residues. Residues 1–90 (MDRTKTRFRK…EPEKELAPEP (90 aa)) are disordered. Residues 16–39 (GKITTSRQPHPQNEQSLQRSTSGY) are compositionally biased toward polar residues. The segment covering 76–90 (DESEEEPEKELAPEP) has biased composition (acidic residues).

This sequence belongs to the Speedy/Ringo family.

The protein is Speedy protein E18 of Homo sapiens (Human).